A 473-amino-acid chain; its full sequence is Ribulose bisphosphate carboxylase large chain (473 aa).

Residues N116 and T166 each coordinate substrate. The active-site Proton acceptor is K168. Position 170 (K170) interacts with substrate. Positions 194, 196, and 197 each coordinate Mg(2+). An N6-carboxylysine modification is found at K194. The active-site Proton acceptor is the H287. Substrate-binding residues include R288, H320, and S372.

This sequence belongs to the RuBisCO large chain family. Type I subfamily. In terms of assembly, heterohexadecamer of 8 large chains and 8 small chains. Mg(2+) serves as cofactor.

The enzyme catalyses 2 (2R)-3-phosphoglycerate + 2 H(+) = D-ribulose 1,5-bisphosphate + CO2 + H2O. It catalyses the reaction D-ribulose 1,5-bisphosphate + O2 = 2-phosphoglycolate + (2R)-3-phosphoglycerate + 2 H(+). RuBisCO catalyzes two reactions: the carboxylation of D-ribulose 1,5-bisphosphate, the primary event in carbon dioxide fixation, as well as the oxidative fragmentation of the pentose substrate. Both reactions occur simultaneously and in competition at the same active site. This Nitrosospira sp. (strain TCH716) protein is Ribulose bisphosphate carboxylase large chain.